The sequence spans 663 residues: Polyunsaturated fatty acid lipoxygenase ALOX15 (663 aa).

One can recognise a PLAT domain in the interval 2 to 115 (GLYRVRVSTG…ILSLPEGTAR (114 aa)). The 548-residue stretch at 116–663 (TVVDDPQGLF…PSRVENSVAI (548 aa)) folds into the Lipoxygenase domain. Positions 361, 366, 541, 545, and 663 each coordinate Fe cation.

It belongs to the lipoxygenase family. Interacts with PEBP1; in response to IL13/interleukin-13, prevents the interaction of PEBP1 with RAF1 to activate the ERK signaling cascade. Fe cation serves as cofactor.

The protein resides in the cytoplasm. The protein localises to the cytosol. It localises to the cell membrane. Its subcellular location is the lipid droplet. It catalyses the reaction (5Z,8Z,11Z,14Z)-eicosatetraenoate + O2 = (12S)-hydroperoxy-(5Z,8Z,10E,14Z)-eicosatetraenoate. It carries out the reaction (5Z,8Z,11Z,14Z)-eicosatetraenoate + O2 = (15S)-hydroperoxy-(5Z,8Z,11Z,13E)-eicosatetraenoate. The catalysed reaction is (9Z,12Z)-octadecadienoate + O2 = (13S)-hydroperoxy-(9Z,11E)-octadecadienoate. The enzyme catalyses (5Z,8Z,11Z,14Z)-eicosatetraenoate + 2 O2 = (14R,15S)-dihydroperoxy-(5Z,8Z,10E,12E)-eicosatetraenoate. It catalyses the reaction (5Z,8Z,11Z,14Z)-eicosatetraenoate + 2 O2 = (8S,15S)-dihydroperoxy-(5Z,9E,11Z,13E)-eicosatetraenoate. It carries out the reaction (14S,15R)-epoxy-(5Z,8Z,11Z)-eicosatrienoate + O2 = (8S)-hydroperoxy-(14S,15R)-epoxy-(5Z,9E,11Z)-eicosatrienoate. The catalysed reaction is (14S,15R)-epoxy-(5Z,8Z,11Z)-eicosatrienoate + O2 = (12S)-hydroperoxy-(14S,15R)-epoxy-(5Z,8Z,10E)-eicosatrienoate. The enzyme catalyses (14R,15S)-epoxy-(5Z,8Z,11Z)-eicosatrienoate + O2 = (5S)-hydroperoxy-(14R,15S)-epoxy-(6E,8Z,11Z)-eicosatrienoate. It catalyses the reaction (14R,15S)-epoxy-(5Z,8Z,11Z)-eicosatrienoate + O2 = (12S)-hydroperoxy-(14R,15S)-epoxy-(5Z,8Z,10E)-eicosatrienoate. It carries out the reaction (15R)-hydroperoxy-(5Z,8Z,11Z,13E)-eicosatetraenoate = 15-oxo-(5Z,8Z,11Z,13E)-eicosatetraenoate + H2O. The catalysed reaction is (15S)-hydroperoxy-(5Z,8Z,11Z,13E)-eicosatetraenoate = (14S,15S)-epoxy-(5Z,8Z,10E,12E)-eicosatetraenoate + H2O. The enzyme catalyses (12S)-hydroperoxy-(5Z,8Z,10E,14Z)-eicosatetraenoate = (8S)-hydroxy-(11S,12S)-epoxy-(5Z,9E,14Z)-eicosatrienoate. It catalyses the reaction (4Z,7Z,10Z,13Z,16Z,19Z)-docosahexaenoate + O2 = 14-hydroperoxy-(4Z,7Z,10Z,12E,16Z,19Z)-docosahexaenoate. It carries out the reaction (4Z,7Z,10Z,13Z,16Z)-docosapentaenoate + O2 = 14-hydroperoxy-(4Z,7Z,10Z,12E,16Z)-docosapentaenoate. The catalysed reaction is (7Z,10Z,13Z,16Z,19Z)-docosapentaenoate + O2 = 14-hydroperoxy-(7Z,10Z,12E,16Z,19Z)-docosapentaenoate. The enzyme catalyses (4Z,7Z,10Z,13Z,16Z,19Z)-docosahexaenoate + O2 = (14S)-hydroperoxy-(4Z,7Z,10Z,12E,16Z,19Z)-docosahexaenoate. It catalyses the reaction (4Z,7Z,10Z,13Z,16Z,19Z)-docosahexaenoate + O2 = (17S)-hydroperoxy-(4Z,7Z,10Z,13Z,15E,19Z)-docosahexaenoate. It carries out the reaction (7S)-hydroperoxy-(4Z,8E,10Z,13Z,16Z,19Z)-docosahexaenoate + O2 = (7S,14S)-dihydroperoxy-(4Z,8E,10Z,12E,16Z,19Z)-docosahexaenoate. The catalysed reaction is (7S)-hydroperoxy-(4Z,8E,10Z,13Z,16Z,19Z)-docosahexaenoate + O2 = (7S,17S)-dihydroperoxy-(4Z,8E,10Z,13Z,15E,19Z)-docosahexaenoate. The enzyme catalyses (4Z,7Z,10Z,13Z,16Z,19Z)-docosahexaenoate + O2 = (11S)-hydroperoxy-(4Z,7Z,9E,13Z,16Z,19Z)-docosahexaenoate. It catalyses the reaction N-(5Z,8Z,11Z,14Z)-eicosatetraenoyl-taurine + O2 = N-(12S)-hydroperoxy-(5Z,8Z,10E,14Z)-eicosatetraenoyl-taurine. It carries out the reaction N-(5Z,8Z,11Z,14Z)-eicosatetraenoyl-gamma-aminobutanoate + O2 = N-(12S)-hydroperoxy-(5Z,8Z,10E,14Z)-eicosatetraenoyl-gamma-aminobutanoate. The catalysed reaction is N-(5Z,8Z,11Z,14Z)-eicosatetraenoyl-glycine + O2 = N-(12S)-hydroperoxy-(5Z,8Z,10E,14Z)-eicosatetraenoyl-glycine. The enzyme catalyses N-(5Z,8Z,11Z,14Z)-eicosatetraenoyl-L-alanine + O2 = N-(12S)-hydroperoxy-(5Z,8Z,10E,14Z)-eicosatetraenoyl-alanine. It catalyses the reaction N-(5Z,8Z,11Z,14Z)-eicosatetraenoyl-taurine + O2 = N-(15S)-hydroperoxy-(5Z,8Z,11Z,13E)-eicosatetraenoyl-taurine. It carries out the reaction N-(5Z,8Z,11Z,14Z)-eicosatetraenoyl-gamma-aminobutanoate + O2 = N-(15S)-hydroperoxy-(5Z,8Z,11Z,13E)-eicosatetraenoyl-gamma-aminobutanoate. The catalysed reaction is N-(5Z,8Z,11Z,14Z)-eicosatetraenoyl-glycine + O2 = N-(15S)-hydroperoxy-(5Z,8Z,11Z,13E)-eicosatetraenoyl-glycine. The enzyme catalyses N-(5Z,8Z,11Z,14Z)-eicosatetraenoyl-L-alanine + O2 = N-(15S)-hydroperoxy-(5Z,8Z,11Z,13E)-eicosatetraenoyl-alanine. The protein operates within lipid metabolism; hydroperoxy eicosatetraenoic acid biosynthesis. In terms of biological role, non-heme iron-containing dioxygenase that catalyzes the stereo-specific peroxidation of free and esterified polyunsaturated fatty acids generating a spectrum of bioactive lipid mediators. It inserts peroxyl groups at C12 or C15 of arachidonate ((5Z,8Z,11Z,14Z)-eicosatetraenoate) producing both 12-hydroperoxyeicosatetraenoate/12-HPETE and 15-hydroperoxyeicosatetraenoate/15-HPETE. It may then act on 12-HPETE to produce hepoxilins, which may show pro-inflammatory properties. Can also peroxidize linoleate ((9Z,12Z)-octadecadienoate) to 13-hydroperoxyoctadecadienoate. May participate in the sequential oxidations of DHA ((4Z,7Z,10Z,13Z,16Z,19Z)-docosahexaenoate) to generate specialized pro-resolving mediators (SPMs)like resolvin D5 ((7S,17S)-diHPDHA) and (7S,14S)-diHPDHA, that actively down-regulate the immune response and have anti-aggregation properties with platelets. Can convert epoxy fatty acids to hydroperoxy-epoxides derivatives followed by an intramolecular nucleophilic substitution leading to the formation of monocyclic endoperoxides. Plays an important role during the maintenance of self-tolerance by peroxidizing membrane-bound phosphatidylethanolamine which can then signal the sorting process for clearance of apoptotic cells during inflammation and prevent an autoimmune response. In addition to its role in the immune and inflammatory responses, this enzyme may play a role in epithelial wound healing in the cornea through production of lipoxin A4 (LXA(4)) and docosahexaenoic acid-derived neuroprotectin D1 (NPD1; 10R,17S-HDHA), both lipid autacoids exhibit anti-inflammatory and neuroprotective properties. Furthermore, it may regulate actin polymerization which is crucial for several biological processes such as the phagocytosis of apoptotic cells. It is also implicated in the generation of endogenous ligands for peroxisome proliferator activated receptor (PPAR-gamma), hence modulating macrophage development and function. It may also exert a negative effect on skeletal development by regulating bone mass through this pathway. As well as participates in ER stress and downstream inflammation in adipocytes, pancreatic islets, and liver. Finally, it is also involved in the cellular response to IL13/interleukin-13. The protein is Polyunsaturated fatty acid lipoxygenase ALOX15 of Sus scrofa (Pig).